The sequence spans 517 residues: Peptide chain release factor 3 (517 aa).

One can recognise a tr-type G domain in the interval 9-269 (AKRRTFAIIS…DFVEHAPAPR (261 aa)). GTP is bound by residues 18–25 (SHPDAGKT), 86–90 (DTPGH), and 140–143 (NKLD).

This sequence belongs to the TRAFAC class translation factor GTPase superfamily. Classic translation factor GTPase family. PrfC subfamily.

The protein localises to the cytoplasm. In terms of biological role, increases the formation of ribosomal termination complexes and stimulates activities of RF-1 and RF-2. It binds guanine nucleotides and has strong preference for UGA stop codons. It may interact directly with the ribosome. The stimulation of RF-1 and RF-2 is significantly reduced by GTP and GDP, but not by GMP. The chain is Peptide chain release factor 3 from Halorhodospira halophila (strain DSM 244 / SL1) (Ectothiorhodospira halophila (strain DSM 244 / SL1)).